An 89-amino-acid polypeptide reads, in one-letter code: Small ribosomal subunit protein uS17 (89 aa).

This sequence belongs to the universal ribosomal protein uS17 family. Part of the 30S ribosomal subunit.

One of the primary rRNA binding proteins, it binds specifically to the 5'-end of 16S ribosomal RNA. The polypeptide is Small ribosomal subunit protein uS17 (Polaromonas naphthalenivorans (strain CJ2)).